Consider the following 275-residue polypeptide: Interleukin-2 receptor subunit alpha (275 aa).

A signal peptide spans 1–21 (MEPSLLLWGILTFVVVHGHVT). The Sushi 1 domain maps to 22 to 84 (ELCDENPPDI…SWENQCRCIS (63 aa)). Over 22 to 243 (ELCDENPPDI…ESFVFTTEYQ (222 aa)) the chain is Extracellular. Intrachain disulfides connect C24-C67, C49-C80, and C51-C82. N-linked (GlcNAc...) asparagine glycans are attached at residues N60 and N70. The tract at residues 91–118 (DGQIIPKPEEQKGKSPMGMQSQMQPTDQ) is disordered. Positions 108–118 (GMQSQMQPTDQ) are enriched in polar residues. The region spanning 123–186 (GHCREPPPWE…WTQPRLQCLS (64 aa)) is the Sushi 2 domain. 2 cysteine pairs are disulfide-bonded: C125-C168 and C152-C184. Residues 188 to 213 (RSDGWFPDDEEPQASTDAALGSDTSC) form a disordered region. Residues 244-262 (IAVAGCVLLLISIVLLSGL) form a helical membrane-spanning segment. Residues 263–275 (TWQRRWRKSRRTI) are Cytoplasmic-facing.

As to quaternary structure, non-covalent dimer of an alpha and a beta subunit. IL2R exists in 3 different forms: a high affinity dimer, an intermediate affinity monomer (beta subunit), and a low affinity monomer (alpha subunit). The high and intermediate affinity forms also associate with a gamma subunit.

The protein resides in the membrane. Receptor for interleukin-2. The receptor is involved in the regulation of immune tolerance by controlling regulatory T cells (TREGs) activity. TREGs suppress the activation and expansion of autoreactive T-cells. The sequence is that of Interleukin-2 receptor subunit alpha (IL2RA) from Felis catus (Cat).